Here is a 599-residue protein sequence, read N- to C-terminus: DNA primase (599 aa).

Residues 38-62 (CPFHQEKTPSFTVSDSKRFFYCFGC) form a CHC2-type zinc finger. Residues 250–332 (NYSILVEGYF…EKKISFIRLP (83 aa)) enclose the Toprim domain. The Mg(2+) site is built by Glu-256, Asp-300, and Asp-302.

Belongs to the DnaG primase family. As to quaternary structure, monomer. Interacts with DnaB. Requires Zn(2+) as cofactor. Mg(2+) is required as a cofactor.

It catalyses the reaction ssDNA + n NTP = ssDNA/pppN(pN)n-1 hybrid + (n-1) diphosphate.. Its function is as follows. RNA polymerase that catalyzes the synthesis of short RNA molecules used as primers for DNA polymerase during DNA replication. This is DNA primase from Rickettsia bellii (strain RML369-C).